The following is a 424-amino-acid chain: MDKLVITGGKRIEGEITASGSKNSSLPIIAATLLSGSGTFTLHRIPDLQDITTFRQLFDHLGAETAFSHNTLTITTANVQSVLAPYELVKKMRASIYVLGPLLARFGHARVSLPGGCAFGPRPIDLHLMAMEKLGARITIETGFIDAVAEGGRLKGATIDFPVSSVGATGNALMAAVLAEGTTIIRNAAAEPEIEALCHFLQAMGADIRGTGTTELIIHGCDSLRHVEFSNIFDRIEAGTILAAAAITGGSVTIRGVIPSHMESVLQKFSDAGCRIETTDDTVILKSTGRLKATDITAEPFPAFPTDMQAQWMALMTQAEGTSEITDHVYHERFNHIPELNRLGAHIDIEGNRAVVHGPQALSGTKVMSTDLRASASLVLAGLVAEGTTEVLRVYHLDRGYERIETRLQNLGAEIKREKYSEFG.

Phosphoenolpyruvate is bound at residue 22–23 (KN). R93 contacts UDP-N-acetyl-alpha-D-glucosamine. The active-site Proton donor is the C117. 2-(S-cysteinyl)pyruvic acid O-phosphothioketal is present on C117. UDP-N-acetyl-alpha-D-glucosamine is bound by residues 122-126 (RPIDL), D307, and V329.

Belongs to the EPSP synthase family. MurA subfamily.

It localises to the cytoplasm. The enzyme catalyses phosphoenolpyruvate + UDP-N-acetyl-alpha-D-glucosamine = UDP-N-acetyl-3-O-(1-carboxyvinyl)-alpha-D-glucosamine + phosphate. Its pathway is cell wall biogenesis; peptidoglycan biosynthesis. Cell wall formation. Adds enolpyruvyl to UDP-N-acetylglucosamine. This is UDP-N-acetylglucosamine 1-carboxyvinyltransferase from Chlorobium luteolum (strain DSM 273 / BCRC 81028 / 2530) (Pelodictyon luteolum).